Reading from the N-terminus, the 457-residue chain is ATP-dependent RNA helicase DbpA (457 aa).

The Q motif motif lies at 3–31 (AFSTLNVLPPAQLTNLNELGYLTMTPVQA). Positions 34–205 (LPAILAGKDV…GRVQRDPLAI (172 aa)) constitute a Helicase ATP-binding domain. 47-54 (AKTGSGKT) contributes to the ATP binding site. The DEAD box motif lies at 153 to 156 (DEAD). The 147-residue stretch at 230 to 376 (PLLQRLLSLH…QTPPANSSIA (147 aa)) folds into the Helicase C-terminal domain. Positions 383–457 (ATLCIDGGKK…GKTCRVRLLK (75 aa)) are involved in 23S rRNA binding.

This sequence belongs to the DEAD box helicase family. DbpA subfamily. Monomer.

It is found in the cytoplasm. The catalysed reaction is ATP + H2O = ADP + phosphate + H(+). With respect to regulation, requires hairpin 92 of 23S rRNA for optimal activity. ATPase activity is stimulated by interaction of the N-terminal domain with RNA. Its function is as follows. DEAD-box RNA helicase involved in the assembly of the 50S ribosomal subunit. Has an RNA-dependent ATPase activity, which is specific for 23S rRNA, and a 3' to 5' RNA helicase activity that uses the energy of ATP hydrolysis to destabilize and unwind short rRNA duplexes. Requires a single-stranded RNA loading site on the 3' side of the substrate helix. This is ATP-dependent RNA helicase DbpA from Escherichia coli (strain K12).